The primary structure comprises 157 residues: Endoribonuclease YbeY (157 aa).

Zn(2+)-binding residues include His114, His118, and His124.

It belongs to the endoribonuclease YbeY family. Requires Zn(2+) as cofactor.

It localises to the cytoplasm. Single strand-specific metallo-endoribonuclease involved in late-stage 70S ribosome quality control and in maturation of the 3' terminus of the 16S rRNA. In Salmonella typhimurium (strain LT2 / SGSC1412 / ATCC 700720), this protein is Endoribonuclease YbeY.